A 257-amino-acid chain; its full sequence is MNRIETAFKNTKPFIGYLTGGDGGFDYSVACAHALIRGGVDILEIGFPFSDPVADGPIIQKAHTRALEEKTDSTTILEIAKALRETSNIPLVLFSYYNPLLQKGPQYLHQLKAAGFDAVLIVDLPIPQHANESEPFFQALIEAKLFPIVLATPSTREERLLQIRKLAKGFLYYVSQKGTTGIRSKLSDDFSTQIARLRCYFQIPIVAGFGIANRASAAAALKHADGIVVGSAFVEKLEKKISPEELTTFAQSIDPRQ.

Residues Glu44 and Asp55 each act as proton acceptor in the active site.

Belongs to the TrpA family. As to quaternary structure, tetramer of two alpha and two beta chains.

It carries out the reaction (1S,2R)-1-C-(indol-3-yl)glycerol 3-phosphate + L-serine = D-glyceraldehyde 3-phosphate + L-tryptophan + H2O. It participates in amino-acid biosynthesis; L-tryptophan biosynthesis; L-tryptophan from chorismate: step 5/5. Functionally, the alpha subunit is responsible for the aldol cleavage of indoleglycerol phosphate to indole and glyceraldehyde 3-phosphate. In Chlamydia caviae (strain ATCC VR-813 / DSM 19441 / 03DC25 / GPIC) (Chlamydophila caviae), this protein is Tryptophan synthase alpha chain.